A 293-amino-acid chain; its full sequence is 4-hydroxy-tetrahydrodipicolinate synthase (293 aa).

Threonine 47 contacts pyruvate. The Proton donor/acceptor role is filled by tyrosine 136. The active-site Schiff-base intermediate with substrate is the lysine 164. Isoleucine 206 is a binding site for pyruvate.

Belongs to the DapA family. Homotetramer; dimer of dimers.

It is found in the cytoplasm. It carries out the reaction L-aspartate 4-semialdehyde + pyruvate = (2S,4S)-4-hydroxy-2,3,4,5-tetrahydrodipicolinate + H2O + H(+). It participates in amino-acid biosynthesis; L-lysine biosynthesis via DAP pathway; (S)-tetrahydrodipicolinate from L-aspartate: step 3/4. Catalyzes the condensation of (S)-aspartate-beta-semialdehyde [(S)-ASA] and pyruvate to 4-hydroxy-tetrahydrodipicolinate (HTPA). The protein is 4-hydroxy-tetrahydrodipicolinate synthase of Listeria innocua serovar 6a (strain ATCC BAA-680 / CLIP 11262).